The following is a 71-amino-acid chain: Large ribosomal subunit protein uL29 (71 aa).

Belongs to the universal ribosomal protein uL29 family.

The protein is Large ribosomal subunit protein uL29 (rpl29) of Halobacterium salinarum (strain ATCC 700922 / JCM 11081 / NRC-1) (Halobacterium halobium).